The sequence spans 173 residues: Probable chemoreceptor glutamine deamidase CheD (173 aa).

This sequence belongs to the CheD family.

It carries out the reaction L-glutaminyl-[protein] + H2O = L-glutamyl-[protein] + NH4(+). Its function is as follows. Probably deamidates glutamine residues to glutamate on methyl-accepting chemotaxis receptors (MCPs), playing an important role in chemotaxis. This is Probable chemoreceptor glutamine deamidase CheD from Haloarcula marismortui (strain ATCC 43049 / DSM 3752 / JCM 8966 / VKM B-1809) (Halobacterium marismortui).